Consider the following 364-residue polypeptide: Sulfate/thiosulfate import ATP-binding protein CysA (364 aa).

An ABC transporter domain is found at 3-237; the sequence is IEIARIKKSF…PATRFVLEFM (235 aa). 35 to 42 is an ATP binding site; the sequence is GPSGSGKT.

The protein belongs to the ABC transporter superfamily. Sulfate/tungstate importer (TC 3.A.1.6) family. In terms of assembly, the complex is composed of two ATP-binding proteins (CysA), two transmembrane proteins (CysT and CysW) and a solute-binding protein (CysP).

It is found in the cell inner membrane. It catalyses the reaction sulfate(out) + ATP + H2O = sulfate(in) + ADP + phosphate + H(+). It carries out the reaction thiosulfate(out) + ATP + H2O = thiosulfate(in) + ADP + phosphate + H(+). Part of the ABC transporter complex CysAWTP involved in sulfate/thiosulfate import. Responsible for energy coupling to the transport system. The chain is Sulfate/thiosulfate import ATP-binding protein CysA from Salmonella typhi.